The chain runs to 258 residues: Phosphoadenosine 5'-phosphosulfate reductase (258 aa).

Cys-244 acts as the Nucleophile; cysteine thiosulfonate intermediate in catalysis.

This sequence belongs to the PAPS reductase family. CysH subfamily.

The protein resides in the cytoplasm. It catalyses the reaction [thioredoxin]-disulfide + sulfite + adenosine 3',5'-bisphosphate + 2 H(+) = [thioredoxin]-dithiol + 3'-phosphoadenylyl sulfate. Its pathway is sulfur metabolism; hydrogen sulfide biosynthesis; sulfite from sulfate: step 3/3. Its function is as follows. Catalyzes the formation of sulfite from phosphoadenosine 5'-phosphosulfate (PAPS) using thioredoxin as an electron donor. The polypeptide is Phosphoadenosine 5'-phosphosulfate reductase (Vibrio vulnificus (strain CMCP6)).